The chain runs to 382 residues: Na(+)/H(+) antiporter NhaA (382 aa).

A run of 11 helical transmembrane segments spans residues 13 to 33 (IGGI…NSPF), 58 to 78 (LLLW…GLEI), 94 to 114 (LVPA…FIFF), 124 to 144 (GWAI…SLLG), 153 to 173 (ILLT…IALF), 179 to 199 (SLLS…LNYF), 204 to 224 (ISVF…SGVH), 256 to 276 (VVFL…FVGL), 285 to 305 (VVLG…FLSL), 325 to 345 (VYGI…IGSL), and 357 to 377 (MVKI…FLVL).

Belongs to the NhaA Na(+)/H(+) (TC 2.A.33) antiporter family.

The protein localises to the cell inner membrane. The catalysed reaction is Na(+)(in) + 2 H(+)(out) = Na(+)(out) + 2 H(+)(in). In terms of biological role, na(+)/H(+) antiporter that extrudes sodium in exchange for external protons. The protein is Na(+)/H(+) antiporter NhaA of Legionella pneumophila (strain Paris).